An 898-amino-acid polypeptide reads, in one-letter code: Serine/threonine-protein kinase TAO3 (898 aa).

Residues 24–277 (FIDLHEIGHG…AVELLRHDFI (254 aa)) form the Protein kinase domain. ATP-binding positions include 30–38 (IGHGSFGAV) and Lys-53. Asp-147 functions as the Proton acceptor in the catalytic mechanism. 2 disordered regions span residues 316 to 375 (TRNG…DESS) and 405 to 424 (DEAG…SVQS). Ser-324 carries the phosphoserine; by ATM modification. 3 positions are modified to phosphoserine: Ser-343, Ser-346, and Ser-349. The segment covering 349–366 (SIPSTSVSTGSRSSSVNS) has biased composition (low complexity). The residue at position 357 (Thr-357) is a Phosphothreonine. A Phosphoserine modification is found at Ser-359. Residues 405 to 416 (DEAGHGDPRPEP) are compositionally biased toward basic and acidic residues. Phosphoserine is present on Ser-442. Coiled-coil stretches lie at residues 452–502 (EQEN…THAN), 548–649 (FLES…HAML), and 754–871 (LKTL…QERE). The tract at residues 565 to 596 (EEMNEDHSTPKKEKQERISKHKENLQHTQAEE) is disordered. N6-acetyllysine is present on Lys-830.

Belongs to the protein kinase superfamily. STE Ser/Thr protein kinase family. STE20 subfamily. Self-associates. Interacts with ERN1 and TRAF2. Interaction with TRAF2 is facilitated under ER stress conditions, such as treatment with tunicamycin, and may promote TRAF2 phosphorylation. Interacts (via N-terminus) with STK25; the interaction promotes STK25 abundance at the level of protein expression and/or stability. In terms of processing, autophosphorylated. Phosphorylation at Ser-324 by ATM following DNA damage is required for activation of the p38/MAPK14 stress-activated MAPK cascade. Phosphorylated at Ser-324 and on Tyr residues during T cell activation. Phosphorylated by LRRK2.

It localises to the cytoplasm. The protein localises to the cell membrane. The protein resides in the membrane raft. It is found in the lipid droplet. It carries out the reaction L-seryl-[protein] + ATP = O-phospho-L-seryl-[protein] + ADP + H(+). The catalysed reaction is L-threonyl-[protein] + ATP = O-phospho-L-threonyl-[protein] + ADP + H(+). Functionally, serine/threonine-protein kinase that acts as a regulator of the p38/MAPK14 stress-activated MAPK cascade and of the MAPK8/JNK cascade. In response to DNA damage, involved in the G2/M transition DNA damage checkpoint by activating the p38/MAPK14 stress-activated MAPK cascade, probably by mediating phosphorylation of upstream MAP2K3 and MAP2K6 kinases. Inhibits basal activity of the MAPK8/JNK cascade and diminishes its activation in response to epidermal growth factor (EGF). Positively regulates canonical T cell receptor (TCR) signaling by preventing early PTPN6/SHP1-mediated inactivation of LCK, ensuring sustained TCR signaling that is required for optimal activation and differentiation of T cells. Phosphorylates PTPN6/SHP1 on 'Thr-394', leading to its polyubiquitination and subsequent proteasomal degradation. Required for cell surface expression of metalloprotease ADAM10 on type 1 transitional B cells which is necessary for their NOTCH-mediated development into marginal zone B cells. Also required for the NOTCH-mediated terminal differentiation of splenic conventional type 2 dendritic cells. Positively regulates osteoblast differentiation by acting as an upstream activator of the JNK pathway. Promotes JNK signaling in hepatocytes and positively regulates hepatocyte lipid storage by inhibiting beta-oxidation and triacylglycerol secretion while enhancing lipid synthesis. Restricts age-associated inflammation by negatively regulating differentiation of macrophages and their production of pro-inflammatory cytokines. Plays a role in negatively regulating the abundance of regulatory T cells in white adipose tissue. This Mus musculus (Mouse) protein is Serine/threonine-protein kinase TAO3 (Taok3).